We begin with the raw amino-acid sequence, 622 residues long: Probable potassium transport system protein Kup (622 aa).

Transmembrane regions (helical) follow at residues 8–28 (LAAL…TSVL), 50–70 (VLSV…VVLV), 100–120 (GWLL…GVIT), 137–157 (PHFG…LFAV), 169–189 (FGPV…PHIV), 203–223 (ALGF…AVVL), 247–267 (WFSV…ALLL), 285–305 (ALVP…QALI), 337–357 (IYLP…VVMF), 366–386 (AYGI…FFVI), 392–412 (YPLA…LAFF), and 419–439 (LLQG…LMMT).

This sequence belongs to the HAK/KUP transporter (TC 2.A.72) family.

Its subcellular location is the cell inner membrane. The catalysed reaction is K(+)(in) + H(+)(in) = K(+)(out) + H(+)(out). Functionally, transport of potassium into the cell. Likely operates as a K(+):H(+) symporter. This Acidovorax ebreus (strain TPSY) (Diaphorobacter sp. (strain TPSY)) protein is Probable potassium transport system protein Kup.